A 281-amino-acid polypeptide reads, in one-letter code: NADPH-dependent 7-cyano-7-deazaguanine reductase (281 aa).

81–83 (IES) contacts substrate. NADPH is bound at residue 83–84 (SK). Cys-188 functions as the Thioimide intermediate in the catalytic mechanism. Asp-195 functions as the Proton donor in the catalytic mechanism. Residue 227-228 (HE) coordinates substrate. 256-257 (RG) provides a ligand contact to NADPH.

The protein belongs to the GTP cyclohydrolase I family. QueF type 2 subfamily. Homodimer.

Its subcellular location is the cytoplasm. The catalysed reaction is 7-aminomethyl-7-carbaguanine + 2 NADP(+) = 7-cyano-7-deazaguanine + 2 NADPH + 3 H(+). It functions in the pathway tRNA modification; tRNA-queuosine biosynthesis. Functionally, catalyzes the NADPH-dependent reduction of 7-cyano-7-deazaguanine (preQ0) to 7-aminomethyl-7-deazaguanine (preQ1). The sequence is that of NADPH-dependent 7-cyano-7-deazaguanine reductase from Paracidovorax citrulli (strain AAC00-1) (Acidovorax citrulli).